A 387-amino-acid polypeptide reads, in one-letter code: Galactokinase (387 aa).

Residue 36–39 (EHTD) coordinates substrate. Residues S70 and 125–131 (GAGLSSS) each bind ATP. The Mg(2+) site is built by S131 and E163. D175 acts as the Proton acceptor in catalysis. Y227 lines the substrate pocket.

This sequence belongs to the GHMP kinase family. GalK subfamily.

Its subcellular location is the cytoplasm. The enzyme catalyses alpha-D-galactose + ATP = alpha-D-galactose 1-phosphate + ADP + H(+). It functions in the pathway carbohydrate metabolism; galactose metabolism. Its function is as follows. Catalyzes the transfer of the gamma-phosphate of ATP to D-galactose to form alpha-D-galactose-1-phosphate (Gal-1-P). The polypeptide is Galactokinase (Streptomyces coelicolor (strain ATCC BAA-471 / A3(2) / M145)).